The chain runs to 433 residues: Protein translocase subunit SecY (433 aa).

10 helical membrane passes run 17-37, 71-91, 117-137, 141-161, 184-204, 212-232, 268-288, 310-330, 366-386, and 388-408; these read IVFT…PIPG, IFAL…LMSV, LTVL…ESIV, GPVV…TLVV, LIIF…MFEL, PLIA…IIFF, GVIP…LANF, YILL…AIVF, LTVI…LLMN, and YVIS…VVLD.

This sequence belongs to the SecY/SEC61-alpha family. Component of the Sec protein translocase complex. Heterotrimer consisting of SecY, SecE and SecG subunits. The heterotrimers can form oligomers, although 1 heterotrimer is thought to be able to translocate proteins. Interacts with the ribosome. Interacts with SecDF, and other proteins may be involved. Interacts with SecA.

Its subcellular location is the cell inner membrane. In terms of biological role, the central subunit of the protein translocation channel SecYEG. Consists of two halves formed by TMs 1-5 and 6-10. These two domains form a lateral gate at the front which open onto the bilayer between TMs 2 and 7, and are clamped together by SecE at the back. The channel is closed by both a pore ring composed of hydrophobic SecY resides and a short helix (helix 2A) on the extracellular side of the membrane which forms a plug. The plug probably moves laterally to allow the channel to open. The ring and the pore may move independently. The sequence is that of Protein translocase subunit SecY from Rickettsia felis (strain ATCC VR-1525 / URRWXCal2) (Rickettsia azadi).